Reading from the N-terminus, the 93-residue chain is MKRILLALLRVYKIALSPYLGSQCRFLPTCSDYARDAIVHHGAARGSWMAACRLCRCHPFAQGGYDPVPGTEADTPVHAATGHAPVAIRLPRP.

It belongs to the UPF0161 family.

Its subcellular location is the cell inner membrane. Could be involved in insertion of integral membrane proteins into the membrane. This is Putative membrane protein insertion efficiency factor from Cupriavidus taiwanensis (strain DSM 17343 / BCRC 17206 / CCUG 44338 / CIP 107171 / LMG 19424 / R1) (Ralstonia taiwanensis (strain LMG 19424)).